We begin with the raw amino-acid sequence, 636 residues long: Threonine--tRNA ligase (636 aa).

The 61-residue stretch at 1–61 (MINITLPDGK…ETDASVVFIT (61 aa)) folds into the TGS domain. A catalytic region spans residues 238-528 (DHRKLGTALD…LIEHYAGKFP (291 aa)). Zn(2+) contacts are provided by Cys-329, His-380, and His-505.

Belongs to the class-II aminoacyl-tRNA synthetase family. Homodimer. Requires Zn(2+) as cofactor.

It localises to the cytoplasm. It carries out the reaction tRNA(Thr) + L-threonine + ATP = L-threonyl-tRNA(Thr) + AMP + diphosphate + H(+). Catalyzes the attachment of threonine to tRNA(Thr) in a two-step reaction: L-threonine is first activated by ATP to form Thr-AMP and then transferred to the acceptor end of tRNA(Thr). Also edits incorrectly charged L-seryl-tRNA(Thr). The sequence is that of Threonine--tRNA ligase from Desulfatibacillum aliphaticivorans.